The chain runs to 372 residues: Queuine tRNA-ribosyltransferase (372 aa).

The active-site Proton acceptor is Asp-89. Residues 89–93 (DSGGF), Asp-161, and Gly-232 contribute to the substrate site. The segment at 262 to 268 (GIGDLPS) is RNA binding. Residue Asp-281 is the Nucleophile of the active site. Residues 286–290 (TKAAR) are RNA binding; important for wobble base 34 recognition. 4 residues coordinate Zn(2+): Cys-319, Cys-321, Cys-324, and His-351.

It belongs to the queuine tRNA-ribosyltransferase family. Homodimer. Within each dimer, one monomer is responsible for RNA recognition and catalysis, while the other monomer binds to the replacement base PreQ1. The cofactor is Zn(2+).

It carries out the reaction 7-aminomethyl-7-carbaguanine + guanosine(34) in tRNA = 7-aminomethyl-7-carbaguanosine(34) in tRNA + guanine. Its pathway is tRNA modification; tRNA-queuosine biosynthesis. Functionally, catalyzes the base-exchange of a guanine (G) residue with the queuine precursor 7-aminomethyl-7-deazaguanine (PreQ1) at position 34 (anticodon wobble position) in tRNAs with GU(N) anticodons (tRNA-Asp, -Asn, -His and -Tyr). Catalysis occurs through a double-displacement mechanism. The nucleophile active site attacks the C1' of nucleotide 34 to detach the guanine base from the RNA, forming a covalent enzyme-RNA intermediate. The proton acceptor active site deprotonates the incoming PreQ1, allowing a nucleophilic attack on the C1' of the ribose to form the product. After dissociation, two additional enzymatic reactions on the tRNA convert PreQ1 to queuine (Q), resulting in the hypermodified nucleoside queuosine (7-(((4,5-cis-dihydroxy-2-cyclopenten-1-yl)amino)methyl)-7-deazaguanosine). In Chlamydia pneumoniae (Chlamydophila pneumoniae), this protein is Queuine tRNA-ribosyltransferase.